The chain runs to 184 residues: Adenine phosphoribosyltransferase (184 aa).

It belongs to the purine/pyrimidine phosphoribosyltransferase family. As to quaternary structure, homodimer.

The protein resides in the cytoplasm. It carries out the reaction AMP + diphosphate = 5-phospho-alpha-D-ribose 1-diphosphate + adenine. Its pathway is purine metabolism; AMP biosynthesis via salvage pathway; AMP from adenine: step 1/1. Its function is as follows. Catalyzes a salvage reaction resulting in the formation of AMP, that is energically less costly than de novo synthesis. The sequence is that of Adenine phosphoribosyltransferase from Acidovorax sp. (strain JS42).